The sequence spans 701 residues: Ribosomal RNA large subunit methyltransferase K/L (701 aa).

Residues Leu43–Leu154 form the THUMP domain.

The protein belongs to the methyltransferase superfamily. RlmKL family.

It localises to the cytoplasm. It catalyses the reaction guanosine(2445) in 23S rRNA + S-adenosyl-L-methionine = N(2)-methylguanosine(2445) in 23S rRNA + S-adenosyl-L-homocysteine + H(+). It carries out the reaction guanosine(2069) in 23S rRNA + S-adenosyl-L-methionine = N(2)-methylguanosine(2069) in 23S rRNA + S-adenosyl-L-homocysteine + H(+). In terms of biological role, specifically methylates the guanine in position 2445 (m2G2445) and the guanine in position 2069 (m7G2069) of 23S rRNA. In Klebsiella pneumoniae subsp. pneumoniae (strain ATCC 700721 / MGH 78578), this protein is Ribosomal RNA large subunit methyltransferase K/L.